The primary structure comprises 224 residues: Thiamine-triphosphatase (224 aa).

Ala2 bears the N-acetylalanine mark. The CYTH domain maps to 5–201 (LIEVERKFTP…AKLLVYLQRF (197 aa)). Mg(2+)-binding residues include Glu7 and Glu9. Positions 11, 55, 57, 65, and 125 each coordinate substrate. The Mg(2+) site is built by Asp145, Glu157, and Glu159. Position 157 (Glu157) interacts with substrate. Substrate is bound at residue Lys193.

This sequence belongs to the ThTPase family. In terms of assembly, monomer. Mg(2+) serves as cofactor.

It is found in the cytoplasm. The enzyme catalyses thiamine triphosphate + H2O = thiamine diphosphate + phosphate + H(+). Hydrolase highly specific for thiamine triphosphate (ThTP). The protein is Thiamine-triphosphatase (Thtpa) of Rattus norvegicus (Rat).